Reading from the N-terminus, the 212-residue chain is uncharacterized protein (212 aa).

S-adenosyl-L-methionine is bound by residues Gly-53, Glu-74, and Asp-97.

It belongs to the methyltransferase superfamily. YrrT family.

In terms of biological role, could be a S-adenosyl-L-methionine-dependent methyltransferase. This is an uncharacterized protein from Bacillus cereus (strain ATCC 10987 / NRS 248).